The following is a 165-amino-acid chain: V-type proton ATPase 16 kDa proteolipid subunit (165 aa).

Topologically, residues 1 to 10 (MSSVFSGDET) are lumenal. A helical membrane pass occupies residues 11-33 (APFFGFLGAAAALVFSCMGAAYG). The Cytoplasmic segment spans residues 34–55 (TAKSGVGVASMGVMRPELVMKS). A helical transmembrane segment spans residues 56-76 (IVPVVMAGVLGIYGLIIAVII). Residues 77-95 (STGINPKAKPYFLFDGYAH) are Lumenal-facing. Residues 96 to 117 (LSSGLACGLAGLAAGMAIGIVG) traverse the membrane as a helical segment. Topologically, residues 118-129 (DAGVRANAQQPK) are cytoplasmic. Residues 130-155 (LFVGMILILIFAEALALYGLIVGIIL) form a helical membrane-spanning segment. Residues 156 to 165 (SSRAGQSRAD) are Lumenal-facing.

This sequence belongs to the V-ATPase proteolipid subunit family. V-ATPase is a heteromultimeric enzyme composed of a peripheral catalytic V1 complex (main components: subunits A, B, C, D, E, and F) attached to an integral membrane V0 proton pore complex (main component: the proteolipid protein; which is present as a hexamer that forms the proton-conducting pore).

The protein localises to the vacuole membrane. Its function is as follows. Proton-conducting pore forming subunit of the membrane integral V0 complex of vacuolar ATPase. V-ATPase is responsible for acidifying a variety of intracellular compartments in eukaryotic cells. This is V-type proton ATPase 16 kDa proteolipid subunit (VATP-P1) from Avena sativa (Oat).